The sequence spans 155 residues: S-ribosylhomocysteine lyase (155 aa).

His58, His62, and Cys125 together coordinate Fe cation.

It belongs to the LuxS family. As to quaternary structure, homodimer. Fe cation is required as a cofactor.

The enzyme catalyses S-(5-deoxy-D-ribos-5-yl)-L-homocysteine = (S)-4,5-dihydroxypentane-2,3-dione + L-homocysteine. Functionally, involved in the synthesis of autoinducer 2 (AI-2) which is secreted by bacteria and is used to communicate both the cell density and the metabolic potential of the environment. The regulation of gene expression in response to changes in cell density is called quorum sensing. Catalyzes the transformation of S-ribosylhomocysteine (RHC) to homocysteine (HC) and 4,5-dihydroxy-2,3-pentadione (DPD). The protein is S-ribosylhomocysteine lyase of Helicobacter pylori (strain P12).